Consider the following 217-residue polypeptide: Ras-related protein RABA2d (217 aa).

19-26 (GDSGVGKT) contributes to the GTP binding site. Residues 41-49 (SKSTIGVEF) carry the Effector region motif. Residues 67–71 (DTAGQ), 125–128 (NKAD), and 155–156 (SA) contribute to the GTP site. A disordered region spans residues 196 to 217 (GQGTTINVEDTSGAGKRGCCST). Residues C214 and C215 are each lipidated (S-geranylgeranyl cysteine).

Belongs to the small GTPase superfamily. Rab family. In terms of tissue distribution, expressed in root tips.

It is found in the endosome membrane. It localises to the golgi apparatus. The protein resides in the trans-Golgi network membrane. In terms of biological role, intracellular vesicle trafficking and protein transport. The protein is Ras-related protein RABA2d (RABA2D) of Arabidopsis thaliana (Mouse-ear cress).